Consider the following 134-residue polypeptide: uncharacterized protein (134 aa).

The next 3 helical transmembrane spans lie at 21 to 41 (FSTTLFEIVIFTFIMITLYLI), 52 to 72 (LVLLLIAIYVIVLQLFFTPYE), and 95 to 115 (IVMALDVLAGLMLILAVVYII).

The protein resides in the host membrane. This is an uncharacterized protein from Acidianus two-tailed virus (ATV).